Here is a 165-residue protein sequence, read N- to C-terminus: Xanthine-guanine phosphoribosyltransferase (165 aa).

5-phospho-alpha-D-ribose 1-diphosphate contacts are provided by residues 41 to 42 (RG) and 98 to 106 (DDLTDTGKT). Residue D99 participates in Mg(2+) binding. Positions 102 and 145 each coordinate guanine. 2 residues coordinate xanthine: D102 and I145. GMP is bound by residues 102–106 (DTGKT) and 144–145 (WI).

It belongs to the purine/pyrimidine phosphoribosyltransferase family. XGPT subfamily. In terms of assembly, homotetramer. The cofactor is Mg(2+).

The protein resides in the cell inner membrane. The enzyme catalyses GMP + diphosphate = guanine + 5-phospho-alpha-D-ribose 1-diphosphate. It catalyses the reaction XMP + diphosphate = xanthine + 5-phospho-alpha-D-ribose 1-diphosphate. The catalysed reaction is IMP + diphosphate = hypoxanthine + 5-phospho-alpha-D-ribose 1-diphosphate. It functions in the pathway purine metabolism; GMP biosynthesis via salvage pathway; GMP from guanine: step 1/1. It participates in purine metabolism; XMP biosynthesis via salvage pathway; XMP from xanthine: step 1/1. Its function is as follows. Purine salvage pathway enzyme that catalyzes the transfer of the ribosyl-5-phosphate group from 5-phospho-alpha-D-ribose 1-diphosphate (PRPP) to the N9 position of the 6-oxopurines guanine and xanthine to form the corresponding ribonucleotides GMP (guanosine 5'-monophosphate) and XMP (xanthosine 5'-monophosphate), with the release of PPi. To a lesser extent, also acts on hypoxanthine. This is Xanthine-guanine phosphoribosyltransferase from Brucella canis (strain ATCC 23365 / NCTC 10854 / RM-666).